Reading from the N-terminus, the 556-residue chain is Formate--tetrahydrofolate ligase (556 aa).

65–72 (TPAGEGKS) is an ATP binding site.

It belongs to the formate--tetrahydrofolate ligase family.

The catalysed reaction is (6S)-5,6,7,8-tetrahydrofolate + formate + ATP = (6R)-10-formyltetrahydrofolate + ADP + phosphate. Its pathway is one-carbon metabolism; tetrahydrofolate interconversion. The polypeptide is Formate--tetrahydrofolate ligase (Streptococcus agalactiae serotype III (strain NEM316)).